A 493-amino-acid polypeptide reads, in one-letter code: Ketol-acid reductoisomerase (NADP(+)) (493 aa).

The 195-residue stretch at 14–208 (LDQLGRCRFM…GGHRAGVLES (195 aa)) folds into the KARI N-terminal Rossmann domain. Residues 45–48 (CGAQ), Arg68, Arg76, Ser78, and 108–110 (DKQ) contribute to the NADP(+) site. His132 is an active-site residue. Gly158 is an NADP(+) binding site. KARI C-terminal knotted domains are found at residues 209 to 345 (SFVA…APKG) and 346 to 486 (ENIK…MTDM). The Mg(2+) site is built by Asp217, Glu221, Glu390, and Glu394. Ser415 is a binding site for substrate.

This sequence belongs to the ketol-acid reductoisomerase family. Mg(2+) is required as a cofactor.

It catalyses the reaction (2R)-2,3-dihydroxy-3-methylbutanoate + NADP(+) = (2S)-2-acetolactate + NADPH + H(+). The enzyme catalyses (2R,3R)-2,3-dihydroxy-3-methylpentanoate + NADP(+) = (S)-2-ethyl-2-hydroxy-3-oxobutanoate + NADPH + H(+). It participates in amino-acid biosynthesis; L-isoleucine biosynthesis; L-isoleucine from 2-oxobutanoate: step 2/4. The protein operates within amino-acid biosynthesis; L-valine biosynthesis; L-valine from pyruvate: step 2/4. Functionally, involved in the biosynthesis of branched-chain amino acids (BCAA). Catalyzes an alkyl-migration followed by a ketol-acid reduction of (S)-2-acetolactate (S2AL) to yield (R)-2,3-dihydroxy-isovalerate. In the isomerase reaction, S2AL is rearranged via a Mg-dependent methyl migration to produce 3-hydroxy-3-methyl-2-ketobutyrate (HMKB). In the reductase reaction, this 2-ketoacid undergoes a metal-dependent reduction by NADPH to yield (R)-2,3-dihydroxy-isovalerate. This Histophilus somni (strain 2336) (Haemophilus somnus) protein is Ketol-acid reductoisomerase (NADP(+)).